A 520-amino-acid chain; its full sequence is AAA-ATPase At5g57480 (520 aa).

Residues 1-24 form the signal peptide; the sequence is MKEYWTSLASLLGVLAFCQSLMQS. Residue 244-251 coordinates ATP; sequence GPPGTGKS. 2 disordered regions span residues 307 to 340 and 467 to 520; these read KKNSSNVSSQRSYYDAETRNGSGSGSGGSGEEGG and NVKD…TRED. Residues 328–340 show a composition bias toward gly residues; that stretch reads SGSGSGGSGEEGG. Positions 497–512 are enriched in acidic residues; sequence QNEDEDHDEEEIELED.

Belongs to the AAA ATPase family. BCS1 subfamily. The cofactor is Mg(2+).

It carries out the reaction ATP + H2O = ADP + phosphate + H(+). The sequence is that of AAA-ATPase At5g57480 from Arabidopsis thaliana (Mouse-ear cress).